A 403-amino-acid polypeptide reads, in one-letter code: Peroxisomal membrane protein PEX13 (403 aa).

Over residues 1–11 (MASQPPPPPKP) the composition is skewed to pro residues. The disordered stretch occupies residues 1–68 (MASQPPPPPK…PSQQTGSSSV (68 aa)). Over 1-134 (MASQPPPPPK…SSRGAFQSIE (134 aa)) the chain is Peroxisomal matrix. The segment covering 59 to 68 (PSQQTGSSSV) has biased composition (polar residues). Residues 135–155 (SIVHAFASVSMMMDATFSAVY) traverse the membrane as a helical segment. The targeting to peroxisomes stretch occupies residues 145–233 (MMMDATFSAV…EDRAATSAKS (89 aa)). The Cytoplasmic portion of the chain corresponds to 156–174 (NSFRAVLDVANHFSRLKIH). Residues 175 to 192 (FTKVFSAFALVRTIRYLY) traverse the membrane as a helical segment. Residues 175–196 (FTKVFSAFALVRTIRYLYRRLQ) form an interaction with PEX19 region. Topologically, residues 193–233 (RRLQRMLGLRRGSENEDLWAESEGTVACLGAEDRAATSAKS) are peroxisomal matrix. Residues 234–254 (WPIFLFFAVILGGPYLIWKLL) traverse the membrane as a helical segment. The Cytoplasmic segment spans residues 255–403 (STHSDEVTDS…IGKDGEKQDL (149 aa)). Positions 272–336 (DDHVVARAEY…PANYVKILGK (65 aa)) constitute an SH3 domain. Residue Ser354 is modified to Phosphoserine.

The protein belongs to the peroxin-13 family. Interacts (via SH3 domain) with PEX14 (via SH3-binding motif); forming the PEX13-PEX14 docking complex. Interacts with PEX19.

The protein localises to the peroxisome membrane. Component of the PEX13-PEX14 docking complex, a translocon channel that specifically mediates the import of peroxisomal cargo proteins bound to PEX5 receptor. The PEX13-PEX14 docking complex forms a large import pore which can be opened to a diameter of about 9 nm. Mechanistically, PEX5 receptor along with cargo proteins associates with the PEX14 subunit of the PEX13-PEX14 docking complex in the cytosol, leading to the insertion of the receptor into the organelle membrane with the concomitant translocation of the cargo into the peroxisome matrix. Involved in the import of PTS1- and PTS2-type containing proteins. This chain is Peroxisomal membrane protein PEX13, found in Homo sapiens (Human).